The following is a 544-amino-acid chain: O-phosphoserine--tRNA(Cys) ligase (544 aa).

Residues 194–196 (HMT), 239–241 (SAS), 281–282 (YY), and N335 contribute to the substrate site.

Belongs to the class-II aminoacyl-tRNA synthetase family. O-phosphoseryl-tRNA(Cys) synthetase subfamily. As to quaternary structure, homotetramer. Interacts with SepCysS.

The catalysed reaction is tRNA(Cys) + O-phospho-L-serine + ATP = O-phospho-L-seryl-tRNA(Cys) + AMP + diphosphate. Catalyzes the attachment of O-phosphoserine (Sep) to tRNA(Cys). This is O-phosphoserine--tRNA(Cys) ligase from Methanopyrus kandleri (strain AV19 / DSM 6324 / JCM 9639 / NBRC 100938).